The chain runs to 283 residues: 4-diphosphocytidyl-2-C-methyl-D-erythritol kinase (283 aa).

Lysine 13 is an active-site residue. ATP is bound at residue 96-106 (PMGGGIGGGSS). Aspartate 138 is a catalytic residue.

Belongs to the GHMP kinase family. IspE subfamily.

The enzyme catalyses 4-CDP-2-C-methyl-D-erythritol + ATP = 4-CDP-2-C-methyl-D-erythritol 2-phosphate + ADP + H(+). Its pathway is isoprenoid biosynthesis; isopentenyl diphosphate biosynthesis via DXP pathway; isopentenyl diphosphate from 1-deoxy-D-xylulose 5-phosphate: step 3/6. Catalyzes the phosphorylation of the position 2 hydroxy group of 4-diphosphocytidyl-2C-methyl-D-erythritol. This Pseudomonas fluorescens (strain Pf0-1) protein is 4-diphosphocytidyl-2-C-methyl-D-erythritol kinase.